The following is a 28-amino-acid chain: Glutathione S-transferase 5 (28 aa).

In terms of domain architecture, GST N-terminal spans Pro-1–Tyr-28. Tyr-7 is a binding site for glutathione.

This sequence belongs to the GST superfamily. Sigma family. As to quaternary structure, homodimer.

The protein resides in the cytoplasm. The catalysed reaction is RX + glutathione = an S-substituted glutathione + a halide anion + H(+). Conjugation of reduced glutathione to a wide number of exogenous and endogenous hydrophobic electrophiles. The chain is Glutathione S-transferase 5 from Gallus gallus (Chicken).